A 345-amino-acid polypeptide reads, in one-letter code: Alanine racemase (345 aa).

Residue Lys-33 is the Proton acceptor; specific for D-alanine of the active site. Lys-33 carries the N6-(pyridoxal phosphate)lysine modification. Arg-128 contributes to the substrate binding site. The Proton acceptor; specific for L-alanine role is filled by Tyr-242. Met-291 contacts substrate.

Belongs to the alanine racemase family. Requires pyridoxal 5'-phosphate as cofactor.

It carries out the reaction L-alanine = D-alanine. The protein operates within amino-acid biosynthesis; D-alanine biosynthesis; D-alanine from L-alanine: step 1/1. Catalyzes the interconversion of L-alanine and D-alanine. May also act on other amino acids. This chain is Alanine racemase (alr), found in Ruegeria sp. (strain TM1040) (Silicibacter sp.).